The sequence spans 483 residues: General transcription factor IIH subunit 4 (483 aa).

The segment at 93–117 (PQQQQSSQQSSSQQQQQQQQQQQQT) is disordered. Over residues 94 to 116 (QQQQSSQQSSSQQQQQQQQQQQQ) the composition is skewed to low complexity.

It belongs to the TFB2 family. Component of the 7-subunit TFIIH core complex composed of XPB/repB, XPD/repD, gtf2h1, gtf2h2, gtf2h3, gtf2h4 and gtf2h5, which is active in NER. The core complex associates with the 3-subunit CDK-activating kinase (CAK) module composed of cycH/cyclin H, cdk7 and mnat1 to form the 10-subunit holoenzyme (holo-TFIIH) active in transcription.

Its subcellular location is the nucleus. In terms of biological role, component of the general transcription and DNA repair factor IIH (TFIIH) core complex, which is involved in general and transcription-coupled nucleotide excision repair (NER) of damaged DNA and, when complexed to CAK, in RNA transcription by RNA polymerase II. In NER, TFIIH acts by opening DNA around the lesion to allow the excision of the damaged oligonucleotide and its replacement by a new DNA fragment. In transcription, TFIIH has an essential role in transcription initiation. When the pre-initiation complex (PIC) has been established, TFIIH is required for promoter opening and promoter escape. Phosphorylation of the C-terminal tail (CTD) of the largest subunit of RNA polymerase II by the kinase module CAK controls the initiation of transcription. This Dictyostelium discoideum (Social amoeba) protein is General transcription factor IIH subunit 4 (gtf2h4).